Consider the following 153-residue polypeptide: Transcriptional repressor NrdR (153 aa).

A zinc finger spans residues 3 to 34 (CPYCNADDTKVIDSRLAAEGAQVRRRRQCNQC). Positions 49–139 (PRIIKSNGRI…VYRDFQDIEA (91 aa)) constitute an ATP-cone domain.

Belongs to the NrdR family. The cofactor is Zn(2+).

Its function is as follows. Negatively regulates transcription of bacterial ribonucleotide reductase nrd genes and operons by binding to NrdR-boxes. The polypeptide is Transcriptional repressor NrdR (Psychrobacter sp. (strain PRwf-1)).